The chain runs to 141 residues: Lutropin subunit beta (141 aa).

The first 22 residues, 1–22, serve as a signal peptide directing secretion; that stretch reads MERYQELTVLLLLLLLEGGSWG. Cystine bridges form between Cys30-Cys78, Cys44-Cys93, Cys47-Cys131, Cys55-Cys109, Cys59-Cys111, and Cys114-Cys121. N-linked (GlcNAc...) asparagine glycosylation is present at Asn34.

It belongs to the glycoprotein hormones subunit beta family. As to quaternary structure, heterodimer of a common alpha chain and a unique beta chain which confers biological specificity to thyrotropin, lutropin, follitropin and gonadotropin.

The protein resides in the secreted. Its function is as follows. Promotes spermatogenesis and ovulation by stimulating the testes and ovaries to synthesize steroids. In Trichosurus vulpecula (Brush-tailed possum), this protein is Lutropin subunit beta (LHB).